The sequence spans 541 residues: Chaperonin GroEL (541 aa).

ATP-binding positions include 29–32, 86–90, Gly413, 476–478, and Asp492; these read TLGP, DGTTT, and NAA.

The protein belongs to the chaperonin (HSP60) family. In terms of assembly, forms a cylinder of 14 subunits composed of two heptameric rings stacked back-to-back. Interacts with the co-chaperonin GroES.

The protein resides in the cytoplasm. It carries out the reaction ATP + H2O + a folded polypeptide = ADP + phosphate + an unfolded polypeptide.. Together with its co-chaperonin GroES, plays an essential role in assisting protein folding. The GroEL-GroES system forms a nano-cage that allows encapsulation of the non-native substrate proteins and provides a physical environment optimized to promote and accelerate protein folding. This Streptococcus equi subsp. zooepidemicus (strain H70) protein is Chaperonin GroEL.